Reading from the N-terminus, the 435-residue chain is AP-2 complex subunit mu (435 aa).

Phosphoserine is present on S45. T156 is modified (phosphothreonine). The MHD domain maps to 170–434 (RNELFLDVLE…IGRSGIYETR (265 aa)). A 1,2-diacyl-sn-glycero-3-phospho-(1D-myo-inositol-3,4,5-trisphosphate) contacts are provided by K341, K345, and K354.

Belongs to the adaptor complexes medium subunit family. Adaptor protein complex 2 (AP-2) is a heterotetramer composed of two large adaptins (alpha-type subunit AP2A1 or AP2A2 and beta-type subunit AP2B1), a medium adaptin (mu-type subunit AP2M1) and a small adaptin (sigma-type subunit AP2S1). Interacts with ATP6V1H and MEGF10. Interacts with EGFR. Interacts with PIP5K1C; tyrosine phosphorylation of PIP5K1C weakens the interaction. Interacts with KIAA0319; required for clathrin-mediated endocytosis of KIAA0319. Interacts with DVL2 (via DEP domain). Interacts with KCNQ1; mediates estrogen-induced internalization via clathrin-coated vesicles. Together with AP2A1 or AP2A2 and AP2B1, it interacts with ADAM10; this interaction facilitates ADAM10 endocytosis from the plasma membrane during long-term potentiation in hippocampal neurons. Probably interacts with ACE2 (via endocytic sorting signal motif); the interaction is inhibited by ACE2 phosphorylation. Interacts with RALBP1; the interaction is direct. Interacts with TMEM106B (via N-terminus). Post-translationally, phosphorylation at Thr-156 increases the affinity of the AP-2 complex for cargo membrane proteins during the initial stages of endocytosis.

It localises to the cell membrane. It is found in the membrane. The protein resides in the coated pit. Component of the adaptor protein complex 2 (AP-2). Adaptor protein complexes function in protein transport via transport vesicles in different membrane traffic pathways. Adaptor protein complexes are vesicle coat components and appear to be involved in cargo selection and vesicle formation. AP-2 is involved in clathrin-dependent endocytosis in which cargo proteins are incorporated into vesicles surrounded by clathrin (clathrin-coated vesicles, CCVs) which are destined for fusion with the early endosome. The clathrin lattice serves as a mechanical scaffold but is itself unable to bind directly to membrane components. Clathrin-associated adaptor protein (AP) complexes which can bind directly to both the clathrin lattice and to the lipid and protein components of membranes are considered to be the major clathrin adaptors contributing the CCV formation. AP-2 also serves as a cargo receptor to selectively sort the membrane proteins involved in receptor-mediated endocytosis. AP-2 seems to play a role in the recycling of synaptic vesicle membranes from the presynaptic surface. AP-2 recognizes Y-X-X-[FILMV] (Y-X-X-Phi) and [ED]-X-X-X-L-[LI] endocytosis signal motifs within the cytosolic tails of transmembrane cargo molecules. AP-2 may also play a role in maintaining normal post-endocytic trafficking through the ARF6-regulated, non-clathrin pathway. During long-term potentiation in hippocampal neurons, AP-2 is responsible for the endocytosis of ADAM10. The AP-2 mu subunit binds to transmembrane cargo proteins; it recognizes the Y-X-X-Phi motifs. The surface region interacting with to the Y-X-X-Phi motif is inaccessible in cytosolic AP-2, but becomes accessible through a conformational change following phosphorylation of AP-2 mu subunit at Thr-156 in membrane-associated AP-2. The membrane-specific phosphorylation event appears to involve assembled clathrin which activates the AP-2 mu kinase AAK1. Plays a role in endocytosis of frizzled family members upon Wnt signaling. The protein is AP-2 complex subunit mu (AP2M1) of Pongo abelii (Sumatran orangutan).